The chain runs to 114 residues: Holo-[acyl-carrier-protein] synthase (114 aa).

Mg(2+) contacts are provided by Asp8 and Glu58.

The protein belongs to the P-Pant transferase superfamily. AcpS family. Mg(2+) is required as a cofactor.

It is found in the cytoplasm. The enzyme catalyses apo-[ACP] + CoA = holo-[ACP] + adenosine 3',5'-bisphosphate + H(+). Transfers the 4'-phosphopantetheine moiety from coenzyme A to a Ser of acyl-carrier-protein. This Mycoplasma genitalium (strain ATCC 33530 / DSM 19775 / NCTC 10195 / G37) (Mycoplasmoides genitalium) protein is Holo-[acyl-carrier-protein] synthase.